The chain runs to 1151 residues: Elicitor of plant defense protein 1 (1151 aa).

3 disordered regions span residues 22-130 (YQDP…TLGE), 178-197 (ERIR…RSIK), and 236-255 (NYNS…DMHP). A compositionally biased stretch (acidic residues) spans 39–49 (IIEDGEPEDEW). Polar residues predominate over residues 64–99 (QNSASRLSKMSLTERFSIQTLDDTDGNTKSNRSSAT). The segment covering 104 to 122 (NPPDFSNGNDDSNGNSQNP) has biased composition (low complexity). Residues 178–187 (ERIRAEESDS) show a composition bias toward basic and acidic residues. The uDENN domain occupies 242-500 (PPPEPLNTDP…NLCTEAFNPL (259 aa)). One can recognise a cDENN domain in the interval 524–656 (EIPGSRTIDI…ARRKLMSLLQ (133 aa)). In terms of domain architecture, dDENN spans 658-1019 (AAPHKLRYGV…DREMQPANDA (362 aa)). Polar residues-rich tracts occupy residues 695-711 (STPK…SSSG) and 744-760 (TSKS…SPVS). The tract at residues 695-809 (STPKSTLGKW…SSSFGVDKHP (115 aa)) is disordered. The segment covering 784–798 (LREKRSGHFGEEKMR) has biased composition (basic and acidic residues). The Phorbol-ester/DAG-type zinc-finger motif lies at 886–934 (GHCFNYMPKDNTSMCTICNDLAEGDGVYRCTGCKIVSHGRCLGYCSLIC).

The protein belongs to the EPD1 elicitor family.

The protein localises to the secreted. It is found in the host cell. Acts as an elicitor that triggers cell death and defense responses in the host plants. This Gibberella zeae (strain ATCC MYA-4620 / CBS 123657 / FGSC 9075 / NRRL 31084 / PH-1) (Wheat head blight fungus) protein is Elicitor of plant defense protein 1.